A 104-amino-acid polypeptide reads, in one-letter code: Iron-sulfur cluster assembly protein CyaY (104 aa).

It belongs to the frataxin family.

Its function is as follows. Involved in iron-sulfur (Fe-S) cluster assembly. May act as a regulator of Fe-S biogenesis. The sequence is that of Iron-sulfur cluster assembly protein CyaY from Aliivibrio fischeri (strain ATCC 700601 / ES114) (Vibrio fischeri).